Here is a 214-residue protein sequence, read N- to C-terminus: Glycine-rich protein 2 (214 aa).

A CSD domain is found at 8-75 (RAKGTVKWFS…RTKAVDVTGP (68 aa)). Positions 54-91 (TVEFEVESGGDGRTKAVDVTGPDGAAVQGGRGGGGGGG) are disordered. A compositionally biased stretch (gly residues) spans 80-91 (VQGGRGGGGGGG). 2 consecutive CCHC-type zinc fingers follow at residues 157 to 174 (SGCFKCGESGHFARDCSQ) and 194 to 211 (GGCYKCGEDGHFARECTS).

The protein is Glycine-rich protein 2 (GRP-2) of Nicotiana sylvestris (Wood tobacco).